The sequence spans 504 residues: Tyrosine-protein phosphatase non-receptor type substrate 1 (504 aa).

The signal sequence occupies residues 1 to 30 (MEPAGPAPGRLGPLLCLLLAASCAWSGVAG). Residues 31 to 373 (EEELQVIQPD…NTGSNERNIY (343 aa)) are Extracellular-facing. In terms of domain architecture, Ig-like V-type spans 32 to 137 (EELQVIQPDK…SPDDVEFKSG (106 aa)). Disulfide bonds link C55/C121 and C170/C228. Ig-like C1-type domains lie at 148–247 (PSAP…ANLS) and 254–348 (PTLE…HDLK). 4 N-linked (GlcNAc...) asparagine glycosylation sites follow: N245, N270, N292, and N319. An intrachain disulfide couples C273 to C331. Residues 336–355 (DGQPAVSKSHDLKVSAHPKE) show a composition bias toward basic and acidic residues. Positions 336–364 (DGQPAVSKSHDLKVSAHPKEQGSNTAAEN) are disordered. The helical transmembrane segment at 374-394 (IVVGVVCTLLVALLMAALYLV) threads the bilayer. Residues 395–504 (RIRQKKAQGS…EYASVQVPRK (110 aa)) are Cytoplasmic-facing. Residues 402 to 504 (QGSTSSTRLH…EYASVQVPRK (103 aa)) are disordered. Positions 409-421 (RLHEPEKNAREIT) are enriched in basic and acidic residues. Phosphotyrosine; by Tyr-kinases is present on Y429. Positions 429 to 432 (YADL) match the SH2-binding motif. Residues 439–444 (KPAPQA) carry the SH3-binding motif. The segment covering 446–467 (EPNNHTEYASIQTSPQPASEDT) has biased composition (polar residues). A phosphotyrosine; by Tyr-kinases mark is found at Y453 and Y470. 3 short sequence motifs (SH2-binding) span residues 453 to 456 (YASI), 470 to 473 (YADL), and 496 to 499 (YASV). Y496 is subject to Phosphotyrosine.

As to quaternary structure, binds PTPN11 when tyrosine-phosphorylated, except in macrophages, where it primarily binds PTPN6. Binds GRB2 in vitro. Binds FGR. Binds JAK2 irrespective of its phosphorylation status and forms a stable complex. Binds SCAP1 and/or SCAP2. The resulting complex recruits FYB1. Binds PTK2B. Interacts with TRIM2. In terms of processing, N-glycosylated. Post-translationally, phosphorylated on tyrosine residues in response to stimulation with EGF, growth hormone, insulin and PDGF. Dephosphorylated by PTPN11. Ubiquitous. Highly expressed in brain. Detected on myeloid cells, but not T-cells. Detected at lower levels in heart, placenta, lung, testis, ovary, colon, liver, small intestine, prostate, spleen, kidney, skeletal muscle and pancreas.

The protein localises to the membrane. In terms of biological role, immunoglobulin-like cell surface receptor for CD47. Acts as docking protein and induces translocation of PTPN6, PTPN11 and other binding partners from the cytosol to the plasma membrane. Supports adhesion of cerebellar neurons, neurite outgrowth and glial cell attachment. May play a key role in intracellular signaling during synaptogenesis and in synaptic function. Involved in the negative regulation of receptor tyrosine kinase-coupled cellular responses induced by cell adhesion, growth factors or insulin. Mediates negative regulation of phagocytosis, mast cell activation and dendritic cell activation. CD47 binding prevents maturation of immature dendritic cells and inhibits cytokine production by mature dendritic cells. Plays a role in antiviral immunity and limits new world arenavirus infection by decreasing virus internalization. Receptor for THBS1. Interaction with THBS1 stimulates phosphorylation of SIRPA. In response to THBS1, involved in ROS signaling in non-phagocytic cells, stimulating NADPH oxidase-derived ROS production. This is Tyrosine-protein phosphatase non-receptor type substrate 1 (SIRPA) from Homo sapiens (Human).